The primary structure comprises 1099 residues: Exonuclease/helicase subunit RexB (1099 aa).

Residues cysteine 766, cysteine 1056, cysteine 1059, and cysteine 1065 each coordinate [4Fe-4S] cluster.

This sequence belongs to the helicase family. AddB/RexB type 2 subfamily. As to quaternary structure, heterodimer of RexA (AddA) and RexB. Requires Mg(2+) as cofactor. The cofactor is [4Fe-4S] cluster.

Its function is as follows. The heterodimer acts both as an ATP-dependent DNA helicase and an ATP-dependent, dual-direction single-stranded exonuclease. Recognizes the L.lactis chi site (5'-GCGCGTG-3'), which stimulates homologous recombination. This subunit has 5'-&gt;3' exonuclease activity. The heterodimer acts as both an ATP-dependent DNA helicase and an ATP-dependent, dual-direction single-stranded exonuclease. Recognizes the chi site generating a DNA molecule suitable for the initiation of homologous recombination. This subunit has 5' -&gt; 3' nuclease activity but not helicase activity. This is Exonuclease/helicase subunit RexB from Lactococcus lactis subsp. cremoris (strain MG1363).